Reading from the N-terminus, the 522-residue chain is Target of rapamycin complex 2 subunit MAPKAP1 (522 aa).

N-acetylalanine is present on Ala-2. The tract at residues 2 to 184 (AFLDNPTIIL…KKIDVYLPLH (183 aa)) is interaction with MAP3K2. The segment at 2–267 (AFLDNPTIIL…GFSTLALVEK (266 aa)) is interaction with NBN. At Thr-86 the chain carries Phosphothreonine. A phosphoserine mark is found at Ser-128, Ser-186, Ser-315, and Ser-356. The 129-residue stretch at 139–267 (QSILSVRLEQ…GFSTLALVEK (129 aa)) folds into the CRIM domain. The segment at 279–353 (LFVRINAAHG…QSAWEFCLVR (75 aa)) is SIN1-type RBD. The SIN1-type PH domain occupies 382 to 487 (HYKSFKVSMI…IVLKVNYILE (106 aa)). Arg-393 lines the a 1,2-diacyl-sn-glycero-3-phospho-(1D-myo-inositol-3,4,5-trisphosphate) pocket. A Phosphothreonine modification is found at Thr-398. A 1,2-diacyl-sn-glycero-3-phospho-(1D-myo-inositol-3,4,5-trisphosphate)-binding residues include Lys-428 and Lys-464. Positions 468 to 522 (FESDAATVNEIVLKVNYILESRASTARADYFAQKQRKLNRRTSFSFQKEKKSGQQ) are interaction with ATF2. The residue at position 510 (Ser-510) is a Phosphoserine.

Belongs to the SIN1 family. In terms of assembly, component of the mechanistic target of rapamycin complex 2 (mTORC2), consisting in two heterotretramers composed of MTOR, MLST8, RICTOR and MAPKAP1/SIN1. The mTORC2 core complex associates with PRR5/PROTOR1 and/or PRR5L/PROTOR2. Contrary to mTORC1, mTORC2 does not bind to and is not sensitive to FKBP12-rapamycin. Interacts with MAP3K2. Interacts with ATF2. Interacts with MAPK8. Interacts with GTP-bound HRAS and KRAS; inhibiting their activity. Interacts with IFNAR2. Post-translationally, phosphorylation at Ser-128 by PKC promotes relocalization to the perinuclear region, where the mTORC2 complex specifically mediates phosphorylation of SGK1. Phosphorylated at Thr-86 by AKT1 or RPS6KB1 in the presence of growth factors; the effect of this phosphorylation is however unclear. According to two studies, phosphorylation at Thr-86 by AKT1 is part of a positive feedback loop that increases mTORC2 activation. According to another study, phosphorylation at Thr-86 and Thr-398 by RPS6KB1 promotes dissociation from the mTORC2 complex, leading to inhibit mTORC2 signaling.

Its subcellular location is the cell membrane. The protein localises to the endoplasmic reticulum membrane. The protein resides in the early endosome membrane. It localises to the late endosome membrane. It is found in the lysosome membrane. Its subcellular location is the golgi apparatus membrane. The protein localises to the mitochondrion outer membrane. The protein resides in the cytoplasm. It localises to the perinuclear region. It is found in the nucleus. With respect to regulation, phosphatidylinositol 3,4,5-trisphosphate (PI(3,4,5)P3) promotes MTOR activation by relieving MAPKAP1/SIN1-mediated inhibition of MTOR that takes place in absence of PI(3,4,5)P3. Its function is as follows. Component of the mechanistic target of rapamycin complex 2 (mTORC2), which transduces signals from growth factors to pathways involved in proliferation, cytoskeletal organization, lipogenesis and anabolic output. In response to growth factors, mTORC2 phosphorylates and activates AGC protein kinase family members, including AKT (AKT1, AKT2 and AKT3), PKC (PRKCA, PRKCB and PRKCE) and SGK1. In contrast to mTORC1, mTORC2 is nutrient-insensitive. Within the mTORC2 complex, MAPKAP1/SIN1 acts as a substrate adapter which recognizes and binds AGC protein kinase family members for phosphorylation by MTOR. mTORC2 plays a critical role in AKT1 activation by mediating phosphorylation of different sites depending on the context, such as 'Thr-450', 'Ser-473', 'Ser-477' or 'Thr-479', facilitating the phosphorylation of the activation loop of AKT1 on 'Thr-308' by PDPK1/PDK1 which is a prerequisite for full activation. mTORC2 catalyzes the phosphorylation of SGK1 at 'Ser-422' and of PRKCA on 'Ser-657'. The mTORC2 complex also phosphorylates various proteins involved in insulin signaling, such as FBXW8 and IGF2BP1. mTORC2 acts upstream of Rho GTPases to regulate the actin cytoskeleton, probably by activating one or more Rho-type guanine nucleotide exchange factors. mTORC2 promotes the serum-induced formation of stress-fibers or F-actin. MAPKAP1 inhibits MAP3K2 by preventing its dimerization and autophosphorylation. Inhibits HRAS and KRAS independently of mTORC2 complex. Enhances osmotic stress-induced phosphorylation of ATF2 and ATF2-mediated transcription. Involved in ciliogenesis, regulates cilia length through its interaction with CCDC28B independently of mTORC2 complex. The protein is Target of rapamycin complex 2 subunit MAPKAP1 (MAPKAP1) of Bos taurus (Bovine).